The chain runs to 183 residues: Bifunctional protein PyrR (183 aa).

Substrate-binding positions include 42–43, arginine 87, 104–112, arginine 137, and valine 161; these read TR and DDVLYTGRT. Residues 100-112 carry the PRPP-binding motif; it reads VILVDDVLYTGRT.

The protein belongs to the purine/pyrimidine phosphoribosyltransferase family. PyrR subfamily.

The enzyme catalyses UMP + diphosphate = 5-phospho-alpha-D-ribose 1-diphosphate + uracil. Its function is as follows. Regulates the transcription of the pyrimidine nucleotide (pyr) operon in response to exogenous pyrimidines. In terms of biological role, also displays a weak uracil phosphoribosyltransferase activity which is not physiologically significant. This Deinococcus radiodurans (strain ATCC 13939 / DSM 20539 / JCM 16871 / CCUG 27074 / LMG 4051 / NBRC 15346 / NCIMB 9279 / VKM B-1422 / R1) protein is Bifunctional protein PyrR.